Consider the following 562-residue polypeptide: Phosphoacetylglucosamine mutase (562 aa).

The active-site Phosphoserine intermediate is S74. Residues S74, D291, D293, and D295 each coordinate Mg(2+). Substrate contacts are provided by residues 395–397 (EAN), 526–530 (RPSGT), and R535.

Belongs to the phosphohexose mutase family. Mg(2+) serves as cofactor.

The enzyme catalyses N-acetyl-alpha-D-glucosamine 1-phosphate = N-acetyl-D-glucosamine 6-phosphate. The protein operates within nucleotide-sugar biosynthesis; UDP-N-acetyl-alpha-D-glucosamine biosynthesis; N-acetyl-alpha-D-glucosamine 1-phosphate from alpha-D-glucosamine 6-phosphate (route I): step 2/2. In terms of biological role, interconverts GlcNAc-6-P and GlcNAc-1-P. In Oryza sativa subsp. japonica (Rice), this protein is Phosphoacetylglucosamine mutase.